A 181-amino-acid chain; its full sequence is Type II secretion system protein H (181 aa).

Positions 1-5 are cleaved as a propeptide — leader sequence; that stretch reads MRQRG. Position 6 is an N-methylphenylalanine (F6). The chain crosses the membrane as a helical span at residues 6–29; sequence FTLLEIMLVVLLAGVAATLVMMAI.

This sequence belongs to the GSP H family. In terms of assembly, type II secretion is composed of four main components: the outer membrane complex, the inner membrane complex, the cytoplasmic secretion ATPase and the periplasm-spanning pseudopilus. Interacts with core component OutG. Cleaved by prepilin peptidase. Post-translationally, methylated by prepilin peptidase at the amino group of the N-terminal phenylalanine once the leader sequence is cleaved by prepilin peptidase.

Its subcellular location is the cell inner membrane. Functionally, component of the type II secretion system required for the energy-dependent secretion of extracellular factors such as proteases and toxins from the periplasm. Part of the pseudopilus tip complex that is critical for the recognition and binding of secretion substrates. The polypeptide is Type II secretion system protein H (outH) (Dickeya chrysanthemi (Pectobacterium chrysanthemi)).